We begin with the raw amino-acid sequence, 298 residues long: ADP/ATP translocase 2 (298 aa).

At Met-1 the chain carries N-acetylmethionine. At 1–7 (MTDAAVS) the chain is on the mitochondrial intermembrane side. Thr-2 is modified (N-acetylthreonine; in ADP/ATP translocase 2, N-terminally processed). One copy of the Solcar 1 repeat lies at 6–98 (VSFAKDFLAG…FAFKDKYKQI (93 aa)). Position 7 is a phosphoserine (Ser-7). Residues 8–37 (FAKDFLAGGVAAAISKTAVAPIERVKLLLQ) traverse the membrane as a helical segment. Lys-23 bears the N6-malonyllysine mark. Residues 38-74 (VQHASKQITADKQYKGIMDCVVRIPKEQGVLSFWRGN) are Mitochondrial matrix-facing. Lys-43 carries the post-translational modification N6-succinyllysine. N6,N6,N6-trimethyllysine; alternate is present on Lys-52. N6,N6-dimethyllysine; alternate is present on Lys-52. N6-methyllysine; alternate is present on Lys-52. The chain crosses the membrane as a helical span at residues 75–99 (LANVIRYFPTQALNFAFKDKYKQIF). 2 residues coordinate ADP: Arg-80 and Lys-92. Lys-92 and Lys-96 each carry N6-malonyllysine. Topologically, residues 100 to 109 (LGGVDKRTQF) are mitochondrial intermembrane. Lys-105 is modified (N6-acetyllysine; alternate). The residue at position 105 (Lys-105) is an N6-succinyllysine; alternate. Residues 110-130 (WRYFAGNLASGGAAGATSLCF) form a helical membrane-spanning segment. Solcar repeat units lie at residues 111 to 201 (RYFA…AKGM) and 212 to 297 (ISWM…IKKY). The Mitochondrial matrix segment spans residues 131-178 (VYPLDFARTRLAADVGKAGDAREFKGLGDCLVKITKSDGIRGLYQGFN). An N6-methyllysine; alternate modification is found at Lys-147. 2 positions are modified to N6-acetyllysine; alternate: Lys-147 and Lys-155. An N6-succinyllysine; alternate mark is found at Lys-147 and Lys-155. Lys-147 carries the N6-malonyllysine; alternate modification. 2 positions are modified to N6-acetyllysine: Lys-163 and Lys-166. A helical transmembrane segment spans residues 179-199 (VSVQGIIIYRAAYFGIYDTAK). Residues 200-210 (GMLPDPKNTHI) are Mitochondrial intermembrane-facing. The chain crosses the membrane as a helical span at residues 211 to 231 (FISWMIAQSVTAVAGLTSYPF). Over 232 to 273 (DTVRRRMMMQSGRKGSDIMYTGTIDCWKKIARDEGSKAFFKG) the chain is Mitochondrial matrix. Arg-235 contacts ADP. The segment at 235–240 (RRRMMM) is important for transport activity. Positions 235–240 (RRRMMM) match the Nucleotide carrier signature motif motif. Lys-268 is subject to N6-acetyllysine; alternate. The residue at position 268 (Lys-268) is an N6-succinyllysine; alternate. Residues 274–291 (AWSNVLRGMGGAFVLVLY) traverse the membrane as a helical segment. The Mitochondrial intermembrane segment spans residues 292 to 298 (DEIKKYT).

Belongs to the mitochondrial carrier (TC 2.A.29) family. As to quaternary structure, monomer. Component of the MMXD complex, which includes CIAO1, ERCC2, CIAO2B, MMS19 and SLC25A5/ANT2. Interacts with AK4. Interacts with TIMM44; leading to inhibit the presequence translocase TIMM23, thereby promoting stabilization of PINK1. In terms of processing, trimethylated by ANTKMT at Lys-52.

The protein resides in the mitochondrion inner membrane. It is found in the membrane. It catalyses the reaction ADP(in) + ATP(out) = ADP(out) + ATP(in). The enzyme catalyses H(+)(in) = H(+)(out). The matrix-open state (m-state) is inhibited by the membrane-permeable bongkrekic acid (BKA). The cytoplasmic-open state (c-state) is inhibited by the membrane-impermeable toxic inhibitor carboxyatractyloside (CATR). Proton transporter activity is inhibited by ADP:ATP antiporter activity. ADP:ATP antiporter that mediates import of ADP into the mitochondrial matrix for ATP synthesis, and export of ATP out to fuel the cell. Cycles between the cytoplasmic-open state (c-state) and the matrix-open state (m-state): operates by the alternating access mechanism with a single substrate-binding site intermittently exposed to either the cytosolic (c-state) or matrix (m-state) side of the inner mitochondrial membrane. In addition to its ADP:ATP antiporter activity, also involved in mitochondrial uncoupling and mitochondrial permeability transition pore (mPTP) activity. Plays a role in mitochondrial uncoupling by acting as a proton transporter: proton transport uncouples the proton flows via the electron transport chain and ATP synthase to reduce the efficiency of ATP production and cause mitochondrial thermogenesis. Proton transporter activity is inhibited by ADP:ATP antiporter activity, suggesting that SLC25A5/ANT2 acts as a master regulator of mitochondrial energy output by maintaining a delicate balance between ATP production (ADP:ATP antiporter activity) and thermogenesis (proton transporter activity). Proton transporter activity requires free fatty acids as cofactor, but does not transport it. Probably mediates mitochondrial uncoupling in tissues that do not express UCP1. Also plays a key role in mPTP opening, a non-specific pore that enables free passage of the mitochondrial membranes to solutes of up to 1.5 kDa, and which contributes to cell death. It is however unclear if SLC25A5/ANT2 constitutes a pore-forming component of mPTP or regulates it. Acts as a regulator of mitophagy independently of ADP:ATP antiporter activity: promotes mitophagy via interaction with TIMM44, leading to inhibit the presequence translocase TIMM23, thereby promoting stabilization of PINK1. As part of the mitotic spindle-associated MMXD complex it may play a role in chromosome segregation. This Tachyglossus aculeatus aculeatus (Southeast Australian short-beaked echidna) protein is ADP/ATP translocase 2.